Consider the following 477-residue polypeptide: MGRTVVVLGGGISGLAASYYLSRAPCPPKVVLVEGSERLGGWIRSVRGPDGAIFELGPRGIRPAGALGARTLLLVSELGLDSEVLPVRGDHPAAQNRFLYVGGALHALPSGIRGLLRPSPPFSKPLFWAGLRDLTTPRGKDPDETVHSFAQRRLGPEVASLAMDSLCRGVFAGNSRELSIRSCFPSLFQAEQTHRSILLGLLLGAGRGPQLDSALIRQAQAERWSQWSLRGGLETLPQALHAHLTSRGVSVLQGQPVCGLSLQAEGRWKVSLEDSSLEADHIISAIPASVLSKLLPAEATPLARALSTITAVSVAVVNLQYRGARLPVQGFGHLVPSSEDPVILGIVYDSVAFPEQDGSLPGLRLTVMLGGSWLQTLEARGCVLSQELLQQEAEKAAATQLGLNEPPSHCLVHLHKNSIPQYTLGHWQKLESAAQFLAAQKLPLTLAGASYEGVAVNDCIESGRQAAARVLGTEPNS.

FAD-binding positions include 9-14 (GGGISG), W42, 57-60 (GPRG), V257, A449, and 454-456 (VAV).

Belongs to the protoporphyrinogen/coproporphyrinogen oxidase family. Protoporphyrinogen oxidase subfamily. As to quaternary structure, monomer. Homodimer. It depends on FAD as a cofactor. Detected in liver (at protein level).

It is found in the mitochondrion inner membrane. It carries out the reaction protoporphyrinogen IX + 3 O2 = protoporphyrin IX + 3 H2O2. It functions in the pathway porphyrin-containing compound metabolism; protoporphyrin-IX biosynthesis; protoporphyrin-IX from protoporphyrinogen-IX: step 1/1. Its function is as follows. Catalyzes the 6-electron oxidation of protoporphyrinogen-IX to form protoporphyrin-IX. The chain is Protoporphyrinogen oxidase (PPOX) from Bos taurus (Bovine).